A 372-amino-acid polypeptide reads, in one-letter code: Phospho-N-acetylmuramoyl-pentapeptide-transferase (372 aa).

The next 10 membrane-spanning stretches (helical) occupy residues 2 to 22 (LVWLFSWLGHYYAPFYAVSSL), 71 to 91 (TPTMGGVLILSAIGVSTLLWA), 98 to 118 (VWILLIVMIIFGAVGWADDWL), 134 to 154 (YFWLSMGALFVGISLYYIATL), 176 to 196 (MIPFSAVPFGIGFIIFTYFVI), 211 to 231 (GLAILPVVLVAAGLGAMAYVS), 251 to 271 (VIIVCGAMIGAGLGFLWFNAH), 275 to 295 (VFMGDVGALSLGAMLGTIAVM), 300 to 320 (IAFAIMGGLFVAEALSVMLQV), and 349 to 369 (QVVARFWIIAIILVILGLMTL).

The protein belongs to the glycosyltransferase 4 family. MraY subfamily. The cofactor is Mg(2+).

Its subcellular location is the cell inner membrane. It carries out the reaction UDP-N-acetyl-alpha-D-muramoyl-L-alanyl-gamma-D-glutamyl-meso-2,6-diaminopimeloyl-D-alanyl-D-alanine + di-trans,octa-cis-undecaprenyl phosphate = di-trans,octa-cis-undecaprenyl diphospho-N-acetyl-alpha-D-muramoyl-L-alanyl-D-glutamyl-meso-2,6-diaminopimeloyl-D-alanyl-D-alanine + UMP. It functions in the pathway cell wall biogenesis; peptidoglycan biosynthesis. Its function is as follows. Catalyzes the initial step of the lipid cycle reactions in the biosynthesis of the cell wall peptidoglycan: transfers peptidoglycan precursor phospho-MurNAc-pentapeptide from UDP-MurNAc-pentapeptide onto the lipid carrier undecaprenyl phosphate, yielding undecaprenyl-pyrophosphoryl-MurNAc-pentapeptide, known as lipid I. The protein is Phospho-N-acetylmuramoyl-pentapeptide-transferase of Psychrobacter cryohalolentis (strain ATCC BAA-1226 / DSM 17306 / VKM B-2378 / K5).